The sequence spans 167 residues: Caltractin (167 aa).

Residues 1–18 show a composition bias toward basic residues; the sequence is MSSARTVRKDKPRGRHHG. Residues 1–23 are disordered; it reads MSSARTVRKDKPRGRHHGLTQQK. EF-hand domains lie at 22–57, 58–93, 95–130, and 131–166; these read QKRQ…LGFE, MTEE…KIGE, DTKE…LGEN, and FTVK…TSYA. Residues aspartate 35, aspartate 37, serine 39, threonine 41, glutamate 46, aspartate 71, aspartate 73, serine 75, glutamate 82, aspartate 108, aspartate 110, asparagine 112, lysine 114, aspartate 119, aspartate 144, aspartate 146, aspartate 148, glutamate 150, and glutamate 155 each contribute to the Ca(2+) site.

Belongs to the centrin family.

Its subcellular location is the cytoplasm. The protein resides in the cytoskeleton. The protein localises to the microtubule organizing center. Plays a fundamental role in microtubule-organizing center structure and function. The polypeptide is Caltractin (Atriplex nummularia (Old man saltbush)).